Reading from the N-terminus, the 278-residue chain is Envelope glycoprotein L (278 aa).

The signal sequence occupies residues Met-1–Ser-30. One can recognise a gL betaherpesvirus-type domain in the interval Val-43–Glu-256. Cys-154 and Cys-159 are joined by a disulfide.

The protein belongs to the herpesviridae glycoprotein L (gL) family. Betaherpesvirinae gL subfamily. Interacts with glycoprotein H (gH); this interaction is necessary for the correct processing and cell surface expression of gH. Forms the envelope pentamer complex (PC) composed of gH, gL, UL128, UL130, and UL131A. The pentamer interacts with host NRP2. Forms the envelope trimer complex composed of gH, gL, and gO. The trimer interacts with host PDGFRA. The trimer also interacts with host EPHA2.

Its subcellular location is the virion membrane. It is found in the host cell membrane. It localises to the host Golgi apparatus. The protein resides in the host trans-Golgi network. The heterodimer glycoprotein H-glycoprotein L is required for the fusion of viral and plasma membranes leading to virus entry into the host cell. Acts as a functional inhibitor of gH and maintains gH in an inhibited form. Upon binding to host integrins, gL dissociates from gH leading to activation of the viral fusion glycoproteins gB and gH. In human cytomegalovirus, forms two distincts complexes to mediate viral entry, a trimer and a pentamer at the surface of the virion envelope. The gH-gL-gO trimer is required for infection in fibroblasts by interacting with host PDGFRA, and in glioblastoma cells by interacting with host EPHA2. The gH-gL-UL128-UL130-UL131A pentamer is essential for viral entry in epithelial, endothelial and myeloid cells via interaction with host NRP2. The protein is Envelope glycoprotein L of Human cytomegalovirus (strain 5040) (HHV-5).